Here is a 390-residue protein sequence, read N- to C-terminus: Transforming growth factor beta-1 proprotein (390 aa).

Positions 1 to 29 (MPPSGLRLLPLLLPLLWLLMLTPGRPVAG) are cleaved as a signal peptide. Residues 30–74 (LSTCKTIDMELVKRKGIEAIRGQILSKLRLASPPSQGDVPPGPLP) are straightjacket domain. The arm domain stretch occupies residues 75–271 (EAILALYNST…ATPLERAQHL (197 aa)). N-linked (GlcNAc...) asparagine glycans are attached at residues Asn82, Asn136, and Asn176. The tract at residues 226-252 (DSKDNTLQVDINGFSSGRRGDLATIHG) is bowtie tail. The Cell attachment site motif lies at 244 to 246 (RGD). 4 disulfide bridges follow: Cys285–Cys294, Cys293–Cys356, Cys322–Cys387, and Cys326–Cys389.

It belongs to the TGF-beta family. Homodimer; disulfide-linked. Interacts with the serine proteases, HTRA1 and HTRA3: the interaction with either inhibits TGFB1-mediated signaling and the HTRA protease activity is required for this inhibition. May interact with THSD4; this interaction may lead to sequestration by FBN1 microfibril assembly and attenuation of TGFB signaling. Interacts with CD109, DPT and ASPN. Interacts with EFEMP2. Interacts with TSKU; the interaction contributes to regulation of the hair cycle. Interacts with TGFBR3. As to quaternary structure, homodimer; disulfide-linked. Interacts with transforming growth factor beta-1 (TGF-beta-1) chain; interaction is non-covalent and maintains TGF-beta-1 in a latent state; each latency-associated peptide (LAP) monomer interacts with TGF-beta-1 in the other monomer. Interacts with LTBP1; leading to regulation of TGF-beta-1 activation. Interacts with LRRC32/GARP; leading to regulation of TGF-beta-1 activation on the surface of activated regulatory T-cells (Tregs). Interacts with LRRC33/NRROS; leading to regulation of TGF-beta-1 activation in macrophages and microglia. Interacts (via cell attachment site) with integrins ITGAV and ITGB6 (ITGAV:ITGB6), leading to release of the active TGF-beta-1. Interacts with NREP; the interaction results in a decrease in TGFB1 autoinduction. Interacts with HSP90AB1; inhibits latent TGFB1 activation. In terms of assembly, homodimer; disulfide-linked. Interacts with TGF-beta receptors (TGFBR1 and TGFBR2), leading to signal transduction. Post-translationally, transforming growth factor beta-1 proprotein: The precursor proprotein is cleaved in the Golgi apparatus by FURIN to form Transforming growth factor beta-1 (TGF-beta-1) and Latency-associated peptide (LAP) chains, which remain non-covalently linked, rendering TGF-beta-1 inactive. N-glycosylated. Deglycosylation leads to activation of Transforming growth factor beta-1 (TGF-beta-1); mechanisms triggering deglycosylation-driven activation of TGF-beta-1 are however unclear.

The protein resides in the secreted. It localises to the extracellular space. It is found in the extracellular matrix. Its function is as follows. Transforming growth factor beta-1 proprotein: Precursor of the Latency-associated peptide (LAP) and Transforming growth factor beta-1 (TGF-beta-1) chains, which constitute the regulatory and active subunit of TGF-beta-1, respectively. In terms of biological role, required to maintain the Transforming growth factor beta-1 (TGF-beta-1) chain in a latent state during storage in extracellular matrix. Associates non-covalently with TGF-beta-1 and regulates its activation via interaction with 'milieu molecules', such as LTBP1, LRRC32/GARP and LRRC33/NRROS, that control activation of TGF-beta-1. Interaction with LRRC33/NRROS regulates activation of TGF-beta-1 in macrophages and microglia. Interaction with LRRC32/GARP controls activation of TGF-beta-1 on the surface of activated regulatory T-cells (Tregs). Interaction with integrins (ITGAV:ITGB6 or ITGAV:ITGB8) results in distortion of the Latency-associated peptide chain and subsequent release of the active TGF-beta-1. Multifunctional protein that regulates the growth and differentiation of various cell types and is involved in various processes, such as normal development, immune function, microglia function and responses to neurodegeneration. Activation into mature form follows different steps: following cleavage of the proprotein in the Golgi apparatus, Latency-associated peptide (LAP) and Transforming growth factor beta-1 (TGF-beta-1) chains remain non-covalently linked rendering TGF-beta-1 inactive during storage in extracellular matrix. At the same time, LAP chain interacts with 'milieu molecules', such as LTBP1, LRRC32/GARP and LRRC33/NRROS that control activation of TGF-beta-1 and maintain it in a latent state during storage in extracellular milieus. TGF-beta-1 is released from LAP by integrins (ITGAV:ITGB6 or ITGAV:ITGB8): integrin-binding to LAP stabilizes an alternative conformation of the LAP bowtie tail and results in distortion of the LAP chain and subsequent release of the active TGF-beta-1. Once activated following release of LAP, TGF-beta-1 acts by binding to TGF-beta receptors (TGFBR1 and TGFBR2), which transduce signal. While expressed by many cells types, TGF-beta-1 only has a very localized range of action within cell environment thanks to fine regulation of its activation by Latency-associated peptide chain (LAP) and 'milieu molecules'. Plays an important role in bone remodeling: acts as a potent stimulator of osteoblastic bone formation, causing chemotaxis, proliferation and differentiation in committed osteoblasts. Can promote either T-helper 17 cells (Th17) or regulatory T-cells (Treg) lineage differentiation in a concentration-dependent manner. At high concentrations, leads to FOXP3-mediated suppression of RORC and down-regulation of IL-17 expression, favoring Treg cell development. At low concentrations in concert with IL-6 and IL-21, leads to expression of the IL-17 and IL-23 receptors, favoring differentiation to Th17 cells. Stimulates sustained production of collagen through the activation of CREB3L1 by regulated intramembrane proteolysis (RIP). Mediates SMAD2/3 activation by inducing its phosphorylation and subsequent translocation to the nucleus. Positively regulates odontoblastic differentiation in dental papilla cells, via promotion of IPO7-mediated translocation of phosphorylated SMAD2 to the nucleus and subsequent transcription of target genes. Can induce epithelial-to-mesenchymal transition (EMT) and cell migration in various cell types. The polypeptide is Transforming growth factor beta-1 proprotein (TGFB1) (Ovis aries (Sheep)).